A 62-amino-acid chain; its full sequence is Alpha-elapitoxin-Pc1 (62 aa).

Disulfide bonds link Cys-3-Cys-24, Cys-17-Cys-41, Cys-43-Cys-54, and Cys-55-Cys-60.

This sequence belongs to the three-finger toxin family. Short-chain subfamily. Type I alpha-neurotoxin sub-subfamily. Expressed by the venom gland.

The protein localises to the secreted. Functionally, bird-specific neurotoxin (tested on chicken) that acts as pseudo-irreversible antagonists at the nicotinic acetylcholine receptor (nAChR) of the skeletal neuromuscular junction. Has no significant effect on the electrically-induced twitches of the rat isolated phrenic nerve-diaphragm preparation. The chain is Alpha-elapitoxin-Pc1 from Pseudechis colletti (Collett's snake).